A 342-amino-acid chain; its full sequence is N-acetyl-gamma-glutamyl-phosphate reductase (342 aa).

The active site involves cysteine 146.

It belongs to the NAGSA dehydrogenase family. Type 1 subfamily.

It localises to the cytoplasm. It carries out the reaction N-acetyl-L-glutamate 5-semialdehyde + phosphate + NADP(+) = N-acetyl-L-glutamyl 5-phosphate + NADPH + H(+). It functions in the pathway amino-acid biosynthesis; L-arginine biosynthesis; N(2)-acetyl-L-ornithine from L-glutamate: step 3/4. Catalyzes the NADPH-dependent reduction of N-acetyl-5-glutamyl phosphate to yield N-acetyl-L-glutamate 5-semialdehyde. This Streptomyces coelicolor (strain ATCC BAA-471 / A3(2) / M145) protein is N-acetyl-gamma-glutamyl-phosphate reductase.